Reading from the N-terminus, the 227-residue chain is Probable N-acetyltransferase family 8 member 5 (227 aa).

The next 3 helical transmembrane spans lie at 29–49 (IPAA…LFVM), 53–73 (IVLV…LLLL), and 201–221 (ISII…SFPS). The N-acetyltransferase domain maps to 69-213 (FLLLLLRLLA…IKWLITFSII (145 aa)).

The protein belongs to the camello family.

The protein localises to the membrane. May play a role in regulation of gastrulation. The polypeptide is Probable N-acetyltransferase family 8 member 5 (Mus musculus (Mouse)).